Consider the following 92-residue polypeptide: Large ribosomal subunit protein eL43 (92 aa).

The C4-type zinc finger occupies 39-60 (CQFCGKDAMKRQAVGIWGCKSC).

Belongs to the eukaryotic ribosomal protein eL43 family.

The sequence is that of Large ribosomal subunit protein eL43 (RPL37A) from Cryptochiton stelleri (Giant gumboot chiton).